The primary structure comprises 443 residues: MKVPRLIVAGTESGAGKTTITISIILKLLANQMKVKPYKIGPDYIDPQFHRLASGVPSENLDLWMMNDDQIRYLLIEGSREFDISVIEGVMGLFDGAGSDFTGSTYDLARRTGTPIVLVIDGYGISATAAAIVSGIKAYAGELLRGVIVTRVSGESHYRLIRDAVEEKTGVPVLGYMIRNEKAVLESRHLGLVQAYEIDEIREIFGAIDSSTVIDMHQIIDIARSADKLETLYSPEIERLGTFKVSVAMDSAFDFYYEENLRMLKRMGASIRYFSPMGNEVPDADSDLIYLGGGYPEVFAGKLQSATDTIEAIRHAASIGTGVYAECGGYMFLCRSLESTDGHIYGGVGIIPASVYMDASLVIGYREISAKRDTSILRAGETARGHEFHKSRIRFDGPYDHPFVLKSRSSSFEDGFSSGSVTATYAHIHFLSNPRVAENLLIA.

The GATase cobBQ-type domain occupies 244-435 (KVSVAMDSAF…AHIHFLSNPR (192 aa)). Cysteine 327 (nucleophile) is an active-site residue.

It belongs to the CobB/CbiA family. Requires Mg(2+) as cofactor.

The catalysed reaction is cob(II)yrinate + 2 L-glutamine + 2 ATP + 2 H2O = cob(II)yrinate a,c diamide + 2 L-glutamate + 2 ADP + 2 phosphate + 2 H(+). Its pathway is cofactor biosynthesis; adenosylcobalamin biosynthesis; cob(II)yrinate a,c-diamide from sirohydrochlorin (anaerobic route): step 10/10. Its function is as follows. Catalyzes the ATP-dependent amidation of the two carboxylate groups at positions a and c of cobyrinate, using either L-glutamine or ammonia as the nitrogen source. This chain is Cobyrinate a,c-diamide synthase, found in Thermoplasma acidophilum (strain ATCC 25905 / DSM 1728 / JCM 9062 / NBRC 15155 / AMRC-C165).